Consider the following 425-residue polypeptide: Serine hydroxymethyltransferase (425 aa).

(6S)-5,6,7,8-tetrahydrofolate contacts are provided by residues leucine 128 and 132–134 (GHL). Lysine 237 bears the N6-(pyridoxal phosphate)lysine mark.

It belongs to the SHMT family. As to quaternary structure, homodimer. The cofactor is pyridoxal 5'-phosphate.

It is found in the cytoplasm. The enzyme catalyses (6R)-5,10-methylene-5,6,7,8-tetrahydrofolate + glycine + H2O = (6S)-5,6,7,8-tetrahydrofolate + L-serine. Its pathway is one-carbon metabolism; tetrahydrofolate interconversion. It participates in amino-acid biosynthesis; glycine biosynthesis; glycine from L-serine: step 1/1. In terms of biological role, catalyzes the reversible interconversion of serine and glycine with tetrahydrofolate (THF) serving as the one-carbon carrier. This reaction serves as the major source of one-carbon groups required for the biosynthesis of purines, thymidylate, methionine, and other important biomolecules. Also exhibits THF-independent aldolase activity toward beta-hydroxyamino acids, producing glycine and aldehydes, via a retro-aldol mechanism. This chain is Serine hydroxymethyltransferase, found in Wolbachia pipientis subsp. Culex pipiens (strain wPip).